Consider the following 299-residue polypeptide: Transcription factor srbB (299 aa).

Disordered regions lie at residues 1–33 and 81–204; these read MAYN…DPLS and ISGF…NAAK. A compositionally biased stretch (low complexity) spans 161–170; sequence PVTSQATTSP. The span at 188–199 shows a compositional bias: polar residues; that stretch reads RSLSTDSQTATG. The segment at 203–216 is basic motif; the sequence is AKRAAHNIIEKRYR. One can recognise a bHLH domain in the interval 203–264; it reads AKRAAHNIIE…TNAIAYMQEL (62 aa). The interval 217–264 is helix-loop-helix motif; the sequence is TNMNAKFVALEKAMSGSGVQKPTKGGSGPASLKKSEILTNAIAYMQEL. Positions 254 to 281 form a coiled coil; the sequence is LTNAIAYMQELQDQNAALQKELALLKQN.

It is found in the nucleus. In terms of biological role, key transcription factors critical for hypoxia adaptation and virulence. Plays a major role in regulation of heme biosynthesis and carbohydrate metabolism early in the response to hypoxia. The chain is Transcription factor srbB from Aspergillus fumigatus (strain ATCC MYA-4609 / CBS 101355 / FGSC A1100 / Af293) (Neosartorya fumigata).